A 318-amino-acid chain; its full sequence is Actin-related protein 2/3 complex subunit 2A (318 aa).

The segment at 297 to 318 (RSMNNKSFKRLGLNEVNHTNSK) is disordered.

Belongs to the ARPC2 family. As to quaternary structure, component of the Arp2/3 complex composed of ARP2, ARP3, ARPC1/p41-ARC, ARPC2/p34-ARC, ARPC3/p21-ARC, ARPC4/p20-ARC and ARPC5/p16-ARC. Interacts with ARPC4. As to expression, expressed at low levels in all tissues with a relatively highest expression in inflorescences.

It localises to the cytoplasm. The protein resides in the cytoskeleton. The protein localises to the cell projection. Functions as actin-binding component of the Arp2/3 complex which is involved in regulation of actin polymerization and together with an activating nucleation-promoting factor (NPF) mediates the formation of branched actin networks. Seems to contact the mother actin filament. Arp2/3 complex plays a critical role in the control of cell morphogenesis via the modulation of cell polarity development. The chain is Actin-related protein 2/3 complex subunit 2A (ARPC2A) from Arabidopsis thaliana (Mouse-ear cress).